Here is a 99-residue protein sequence, read N- to C-terminus: Nucleoid-associated protein SPN23F10240 (99 aa).

The protein belongs to the YbaB/EbfC family. In terms of assembly, homodimer.

The protein localises to the cytoplasm. The protein resides in the nucleoid. In terms of biological role, binds to DNA and alters its conformation. May be involved in regulation of gene expression, nucleoid organization and DNA protection. This Streptococcus pneumoniae (strain ATCC 700669 / Spain 23F-1) protein is Nucleoid-associated protein SPN23F10240.